Consider the following 147-residue polypeptide: D-aminoacyl-tRNA deacylase (147 aa).

A Gly-cisPro motif, important for rejection of L-amino acids motif is present at residues 136-137 (GP).

It belongs to the DTD family. In terms of assembly, homodimer.

It localises to the cytoplasm. It carries out the reaction glycyl-tRNA(Ala) + H2O = tRNA(Ala) + glycine + H(+). It catalyses the reaction a D-aminoacyl-tRNA + H2O = a tRNA + a D-alpha-amino acid + H(+). Functionally, an aminoacyl-tRNA editing enzyme that deacylates mischarged D-aminoacyl-tRNAs. Also deacylates mischarged glycyl-tRNA(Ala), protecting cells against glycine mischarging by AlaRS. Acts via tRNA-based rather than protein-based catalysis; rejects L-amino acids rather than detecting D-amino acids in the active site. By recycling D-aminoacyl-tRNA to D-amino acids and free tRNA molecules, this enzyme counteracts the toxicity associated with the formation of D-aminoacyl-tRNA entities in vivo and helps enforce protein L-homochirality. The protein is D-aminoacyl-tRNA deacylase of Streptococcus pyogenes serotype M1.